A 299-amino-acid polypeptide reads, in one-letter code: S-fimbrial protein subunit SfaH (299 aa).

This sequence belongs to the fimbrial protein family.

It localises to the fimbrium. Functionally, fimbriae (also called pili), polar filaments radiating from the surface of the bacterium to a length of 0.5-1.5 micrometers and numbering 100-300 per cell, enable bacteria to colonize the epithelium of specific host organs. Its function is as follows. A minor fimbrial subunit. This protein is necessary for full expression of S-specific binding. S-fimbrial adhesins enable pathogenic E.coli causing urinary-tract infections or newborn meningitis to attach to glycoproteins terminating with alpha-sialic acid-(2-3)-beta-Gal. The polypeptide is S-fimbrial protein subunit SfaH (sfaH) (Escherichia coli O6:K15:H31 (strain 536 / UPEC)).